The sequence spans 70 residues: MMFRLTSVGSFLLVIVFLNLVVLTNACDLEGMFCMYDFECCLSECCMGICAFGCTKRAQRQKLLRSFGQR.

An N-terminal signal peptide occupies residues 1–26 (MMFRLTSVGSFLLVIVFLNLVVLTNA). Cystine bridges form between Cys-27–Cys-41, Cys-34–Cys-46, Cys-40–Cys-50, and Cys-45–Cys-54. Residues 58–70 (AQRQKLLRSFGQR) constitute a propeptide that is removed on maturation.

The protein belongs to the conotoxin I2 superfamily. As to expression, expressed by the venom duct.

Its subcellular location is the secreted. The protein is Conotoxin Lt11.6 of Conus litteratus (Lettered cone).